Reading from the N-terminus, the 471-residue chain is Regulator of microtubule dynamics protein 3 (471 aa).

The Mitochondrial intermembrane portion of the chain corresponds to 1-12 (MSRLGALGGSRA). Residues 13–35 (GLGLLLGTAAGLGFLCVLYSQRW) form a helical membrane-spanning segment. The Cytoplasmic segment spans residues 36–471 (KRTQRHGRSQ…LEELEVILGK (436 aa)). 4 positions are modified to phosphoserine: S44, S46, S50, and S57. The stretch at 91-125 (LDRLDFVLTSLMALRREVEELQRSLQGLAGEIVGE) forms a coiled coil. The short motif at 157-163 (VYFTASS) is the FFAT element. The residue at position 160 (T160) is a Phosphothreonine. A disordered region spans residues 168-203 (TDAESEGGYTTANAESDYERDSDKESEDAEDEVSCE). Phosphoserine is present on residues S183, S193, S212, and S233. The segment covering 191 to 201 (KESEDAEDEVS) has biased composition (acidic residues).

Belongs to the RMDN family. In terms of assembly, interacts with PTPN2. Interacts with microtubules. Interacts with VAPB. Interacts (via FFAT motif) with MOSPD2 (via MSP domain). Interacts (via phosphorylated FFAT motif) with MOSPD2, VAPA and VAPB. Phosphorylation at Thr-160 of the FFAT motif activates interaction with MOSPD2, VAPA and VAPB.

It is found in the mitochondrion outer membrane. The protein resides in the cytoplasm. It localises to the nucleus. Its subcellular location is the cytoskeleton. The protein localises to the spindle. It is found in the spindle pole. In terms of biological role, involved in cellular calcium homeostasis regulation. May participate in differentiation and apoptosis of keratinocytes. Overexpression induces apoptosis. This chain is Regulator of microtubule dynamics protein 3, found in Rattus norvegicus (Rat).